Consider the following 273-residue polypeptide: MNNRVHQGHLARKRFGQNFLNDRFVIDSIVSAINPQKGQAMVEIGPGLAALTEPVGERLDKLTVIELDRDLAARLQTHPFLGSKLTIYQQDAMTMNFGELSAQLGQPLRVFGNLPYNISTPLMFHLFSYTDAIADMHFMLQKEVVNRLVAGPNSKAYGRLSVMAQYYCQVIPVLEVPPSAFTPPPKVDSAVVRLVPHATMPYPVKDIRVLSRITTEAFNQRRKTIRNSLGNLFSVETLTEMGIDPAMRAENISVAQYCQMANYLSENAPLKES.

Asn18, Leu20, Gly45, Glu66, Asp91, and Asn113 together coordinate S-adenosyl-L-methionine.

It belongs to the class I-like SAM-binding methyltransferase superfamily. rRNA adenine N(6)-methyltransferase family. RsmA subfamily.

It localises to the cytoplasm. The enzyme catalyses adenosine(1518)/adenosine(1519) in 16S rRNA + 4 S-adenosyl-L-methionine = N(6)-dimethyladenosine(1518)/N(6)-dimethyladenosine(1519) in 16S rRNA + 4 S-adenosyl-L-homocysteine + 4 H(+). In terms of biological role, specifically dimethylates two adjacent adenosines (A1518 and A1519) in the loop of a conserved hairpin near the 3'-end of 16S rRNA in the 30S particle. May play a critical role in biogenesis of 30S subunits. This chain is Ribosomal RNA small subunit methyltransferase A, found in Salmonella choleraesuis (strain SC-B67).